Reading from the N-terminus, the 471-residue chain is Glutamate--tRNA ligase 1 (471 aa).

Residues 15 to 25 (PSPTGYLHIGG) carry the 'HIGH' region motif. A 'KMSKS' region motif is present at residues 243–247 (KLSKR). Lysine 246 contacts ATP.

Belongs to the class-I aminoacyl-tRNA synthetase family. Glutamate--tRNA ligase type 1 subfamily. As to quaternary structure, monomer.

The protein localises to the cytoplasm. The catalysed reaction is tRNA(Glu) + L-glutamate + ATP = L-glutamyl-tRNA(Glu) + AMP + diphosphate. In terms of biological role, catalyzes the attachment of glutamate to tRNA(Glu) in a two-step reaction: glutamate is first activated by ATP to form Glu-AMP and then transferred to the acceptor end of tRNA(Glu). The polypeptide is Glutamate--tRNA ligase 1 (Cereibacter sphaeroides (strain ATCC 17029 / ATH 2.4.9) (Rhodobacter sphaeroides)).